We begin with the raw amino-acid sequence, 272 residues long: Shikimate dehydrogenase (NADP(+)) (272 aa).

Shikimate-binding positions include 20-22 (TMS) and Thr-67. Lys-71 serves as the catalytic Proton acceptor. An NADP(+)-binding site is contributed by Glu-83. Residues Asn-92 and Asp-107 each coordinate shikimate. NADP(+) is bound by residues 129-133 (GAGGA), 153-158 (NRTKSK), and Leu-216. Tyr-218 serves as a coordination point for shikimate. Gly-239 is an NADP(+) binding site.

This sequence belongs to the shikimate dehydrogenase family. Homodimer.

It carries out the reaction shikimate + NADP(+) = 3-dehydroshikimate + NADPH + H(+). It participates in metabolic intermediate biosynthesis; chorismate biosynthesis; chorismate from D-erythrose 4-phosphate and phosphoenolpyruvate: step 4/7. Its function is as follows. Involved in the biosynthesis of the chorismate, which leads to the biosynthesis of aromatic amino acids. Catalyzes the reversible NADPH linked reduction of 3-dehydroshikimate (DHSA) to yield shikimate (SA). The chain is Shikimate dehydrogenase (NADP(+)) from Maridesulfovibrio salexigens (strain ATCC 14822 / DSM 2638 / NCIMB 8403 / VKM B-1763) (Desulfovibrio salexigens).